The primary structure comprises 357 residues: Protein RecA (357 aa).

Gly-73–Thr-80 is a binding site for ATP.

It belongs to the RecA family.

The protein resides in the cytoplasm. Can catalyze the hydrolysis of ATP in the presence of single-stranded DNA, the ATP-dependent uptake of single-stranded DNA by duplex DNA, and the ATP-dependent hybridization of homologous single-stranded DNAs. It interacts with LexA causing its activation and leading to its autocatalytic cleavage. In Methylibium petroleiphilum (strain ATCC BAA-1232 / LMG 22953 / PM1), this protein is Protein RecA.